A 205-amino-acid chain; its full sequence is Small ribosomal subunit protein uS4 (205 aa).

Positions 1–16 are enriched in basic and acidic residues; the sequence is MSKRESSKYKIDRRMG. The tract at residues 1 to 46 is disordered; that stretch reads MSKRESSKYKIDRRMGENIWGRPKSPVNRREYGPGQHGQRRKSKLS. Residues 94–157 enclose the S4 RNA-binding domain; sequence SRLDAIVYRA…KQLVTVLEAV (64 aa).

This sequence belongs to the universal ribosomal protein uS4 family. As to quaternary structure, part of the 30S ribosomal subunit. Contacts protein S5. The interaction surface between S4 and S5 is involved in control of translational fidelity.

Functionally, one of the primary rRNA binding proteins, it binds directly to 16S rRNA where it nucleates assembly of the body of the 30S subunit. With S5 and S12 plays an important role in translational accuracy. This chain is Small ribosomal subunit protein uS4, found in Rhizobium meliloti (strain 1021) (Ensifer meliloti).